A 493-amino-acid chain; its full sequence is Anthranilate synthase component 1 (493 aa).

L-tryptophan-binding positions include Ser48 and 273 to 275; that span reads PYM. 308 to 309 contributes to the chorismate binding site; that stretch reads GT. Glu335 is a Mg(2+) binding site. Residues Tyr423, Arg443, 457–459, and Gly459 each bind chorismate; that span reads GGG. Glu472 lines the Mg(2+) pocket.

It belongs to the anthranilate synthase component I family. In terms of assembly, heterotetramer consisting of two non-identical subunits: a beta subunit (TrpG) and a large alpha subunit (TrpE). It depends on Mg(2+) as a cofactor.

The catalysed reaction is chorismate + L-glutamine = anthranilate + pyruvate + L-glutamate + H(+). It participates in amino-acid biosynthesis; L-tryptophan biosynthesis; L-tryptophan from chorismate: step 1/5. Feedback inhibited by tryptophan. Functionally, part of a heterotetrameric complex that catalyzes the two-step biosynthesis of anthranilate, an intermediate in the biosynthesis of L-tryptophan. In the first step, the glutamine-binding beta subunit (TrpG) of anthranilate synthase (AS) provides the glutamine amidotransferase activity which generates ammonia as a substrate that, along with chorismate, is used in the second step, catalyzed by the large alpha subunit of AS (TrpE) to produce anthranilate. In the absence of TrpG, TrpE can synthesize anthranilate directly from chorismate and high concentrations of ammonia. The sequence is that of Anthranilate synthase component 1 (trpE) from Pseudomonas putida (Arthrobacter siderocapsulatus).